Here is a 212-residue protein sequence, read N- to C-terminus: Tetraspanin-31-B (212 aa).

Over 1–12 (MVCGGFTCSKNA) the chain is Cytoplasmic. Residues 13–33 (LCALNVVYMLVGVLLIIVAAW) traverse the membrane as a helical segment. The Extracellular portion of the chain corresponds to 34-44 (GKGFGIVSSIH). Residues 45–65 (IIGGVIAIGVFLLLIAIIGLI) form a helical membrane-spanning segment. Residues 66 to 72 (GAVSHHQ) are Cytoplasmic-facing. The chain crosses the membrane as a helical span at residues 73-93 (VMLFIYMVVLILVFIFQFIVS). Over 94 to 175 (CSCLAMNRSQ…MLNHADEALK (82 aa)) the chain is Extracellular. Asn-100, Asn-109, Asn-117, and Asn-134 each carry an N-linked (GlcNAc...) asparagine glycan. Residues 176–196 (ILGGVGLFFSFTEILGVWLAF) form a helical membrane-spanning segment. Topologically, residues 197-212 (RYRNQKDPRANPSAFL) are cytoplasmic.

The protein belongs to the tetraspanin (TM4SF) family.

It is found in the membrane. The chain is Tetraspanin-31-B (tspan31-b) from Xenopus laevis (African clawed frog).